A 338-amino-acid polypeptide reads, in one-letter code: Pseudouridylate synthase TRUB1 (338 aa).

N-acetylalanine is present on Ala2. Asp109 acts as the Nucleophile in catalysis.

It belongs to the pseudouridine synthase TruB family.

The protein localises to the nucleus. The protein resides in the cytoplasm. It localises to the cytosol. It catalyses the reaction a uridine in mRNA = a pseudouridine in mRNA. It carries out the reaction a uridine in tRNA = a pseudouridine in tRNA. The enzyme catalyses uridine(55) in tRNA = pseudouridine(55) in tRNA. In terms of biological role, pseudouridine synthase that catalyzes pseudouridylation of mRNAs and tRNAs. Mediates pseudouridylation of mRNAs with the consensus sequence 5'-GUUCNANNC-3', harboring a stem-loop structure. Constitutes the major pseudouridine synthase acting on mRNAs. Also catalyzes pseudouridylation of some tRNAs, including synthesis of pseudouridine(55) from uracil-55, in the psi GC loop of a subset of tRNAs. Promotes the processing of pri-let-7 microRNAs (pri-miRNAs) independently of its RNA pseudouridylate synthase activity. Acts by binding to the stem-loop structure on pri-let-7, preventing LIN28-binding (LIN28A and/or LIN28B), thereby enhancing the interaction between pri-let-7 and the microprocessor DGCR8, which mediates miRNA maturation. The sequence is that of Pseudouridylate synthase TRUB1 from Mus musculus (Mouse).